Reading from the N-terminus, the 764-residue chain is 5-methyltetrahydropteroyltriglutamate--homocysteine methyltransferase (764 aa).

5-methyltetrahydropteroyltri-L-glutamate is bound by residues 16–19 and lysine 121; that span reads RELK. Residues 440 to 442 and glutamate 493 each bind L-homocysteine; that span reads IGS. L-methionine contacts are provided by residues 440–442 and glutamate 493; that span reads IGS. 5-methyltetrahydropteroyltri-L-glutamate-binding positions include 524-525 and tryptophan 570; that span reads RC. Aspartate 608 contacts L-homocysteine. Aspartate 608 is an L-methionine binding site. Position 614 (glutamate 614) interacts with 5-methyltetrahydropteroyltri-L-glutamate. Residues histidine 650, cysteine 652, and glutamate 674 each coordinate Zn(2+). The active-site Proton donor is the histidine 703. Cysteine 735 contacts Zn(2+).

It belongs to the vitamin-B12 independent methionine synthase family. Requires Zn(2+) as cofactor.

The enzyme catalyses 5-methyltetrahydropteroyltri-L-glutamate + L-homocysteine = tetrahydropteroyltri-L-glutamate + L-methionine. Its pathway is amino-acid biosynthesis; L-methionine biosynthesis via de novo pathway; L-methionine from L-homocysteine (MetE route): step 1/1. Catalyzes the transfer of a methyl group from 5-methyltetrahydrofolate to homocysteine resulting in methionine formation. This chain is 5-methyltetrahydropteroyltriglutamate--homocysteine methyltransferase, found in Burkholderia ambifaria (strain ATCC BAA-244 / DSM 16087 / CCUG 44356 / LMG 19182 / AMMD) (Burkholderia cepacia (strain AMMD)).